A 344-amino-acid chain; its full sequence is Fe-S cluster assembly protein DRE2 (344 aa).

An N-terminal SAM-like domain region spans residues 1 to 160 (MTSNILLLLH…KKLNNDNAST (160 aa)). Residues 154-179 (NNDNASTPGLTDSSAGTSEDETATVS) form a disordered region. Residues 155-170 (NDNASTPGLTDSSAGT) are compositionally biased toward polar residues. The segment at 161-223 (PGLTDSSAGT…NDLIAESNKY (63 aa)) is linker. Residues Cys231, Cys243, Cys246, and Cys248 each contribute to the [2Fe-2S] cluster site. The interval 231–248 (CELPNGKKRKKACKDCTC) is fe-S binding site A. Residues Cys313, Cys316, Cys324, and Cys327 each contribute to the [4Fe-4S] cluster site. 2 short sequence motifs (cx2C motif) span residues 313–316 (CGSC) and 324–327 (CDGC). A fe-S binding site B region spans residues 313–327 (CGSCSLGDAFRCDGC).

The protein belongs to the anamorsin family. As to quaternary structure, monomer. Interacts with TAH18. Interacts with MIA40. It depends on [2Fe-2S] cluster as a cofactor. Requires [4Fe-4S] cluster as cofactor.

Its subcellular location is the cytoplasm. It localises to the mitochondrion intermembrane space. Its function is as follows. Component of the cytosolic iron-sulfur (Fe-S) protein assembly (CIA) machinery required for the maturation of extramitochondrial Fe-S proteins. Part of an electron transfer chain functioning in an early step of cytosolic Fe-S biogenesis, facilitating the de novo assembly of a [4Fe-4S] cluster on the scaffold complex CFD1-NBP35. Electrons are transferred to DRE2 from NADPH via the FAD- and FMN-containing protein TAH18. TAH18-DRE2 are also required for the assembly of the diferric tyrosyl radical cofactor of ribonucleotide reductase (RNR), probably by providing electrons for reduction during radical cofactor maturation in the catalytic small subunit RNR2. This Candida tropicalis (strain ATCC MYA-3404 / T1) (Yeast) protein is Fe-S cluster assembly protein DRE2.